Consider the following 179-residue polypeptide: ATP-dependent protease subunit HslV (179 aa).

Thr7 is an active-site residue. Residues Gly162, Cys165, and Thr168 each contribute to the Na(+) site.

It belongs to the peptidase T1B family. HslV subfamily. A double ring-shaped homohexamer of HslV is capped on each side by a ring-shaped HslU homohexamer. The assembly of the HslU/HslV complex is dependent on binding of ATP.

It is found in the cytoplasm. It carries out the reaction ATP-dependent cleavage of peptide bonds with broad specificity.. Allosterically activated by HslU binding. Protease subunit of a proteasome-like degradation complex believed to be a general protein degrading machinery. This chain is ATP-dependent protease subunit HslV, found in Bordetella avium (strain 197N).